The primary structure comprises 234 residues: HTH-type transcriptional repressor FabR (234 aa).

An HTH tetR-type domain is found at Lys-29–Leu-89. Positions Ser-52–Phe-71 form a DNA-binding region, H-T-H motif.

In terms of assembly, homodimer.

The protein localises to the cytoplasm. With respect to regulation, has been suggested to require either an unsaturated acyl carrier protein or unsaturated acyl-CoA (but not their saturated equivalents) for DNA-binding. Another group suggests that unsaturated thioesters are not essential but act instead to enhance DNA-binding. Binds the promoter region of at least fabA and fabB, but probably not yqfA. Represses the transcription of fabA and fabB, involved in unsaturated fatty acid (UFA) biosynthesis. By controlling UFA production, FabR directly influences the physical properties of the membrane bilayer. The protein is HTH-type transcriptional repressor FabR of Escherichia coli (strain K12).